The following is an 80-amino-acid chain: Exodeoxyribonuclease 7 small subunit (80 aa).

Belongs to the XseB family. In terms of assembly, heterooligomer composed of large and small subunits.

It is found in the cytoplasm. The catalysed reaction is Exonucleolytic cleavage in either 5'- to 3'- or 3'- to 5'-direction to yield nucleoside 5'-phosphates.. Its function is as follows. Bidirectionally degrades single-stranded DNA into large acid-insoluble oligonucleotides, which are then degraded further into small acid-soluble oligonucleotides. This chain is Exodeoxyribonuclease 7 small subunit, found in Pseudomonas fluorescens (strain Pf0-1).